A 122-amino-acid chain; its full sequence is Putative iron-sulfur cluster insertion protein ErpA (122 aa).

3 residues coordinate iron-sulfur cluster: cysteine 50, cysteine 114, and cysteine 116.

This sequence belongs to the HesB/IscA family. In terms of assembly, homodimer. Requires iron-sulfur cluster as cofactor.

Required for insertion of 4Fe-4S clusters. This chain is Putative iron-sulfur cluster insertion protein ErpA, found in Bordetella petrii (strain ATCC BAA-461 / DSM 12804 / CCUG 43448).